The chain runs to 185 residues: Elongation factor P (185 aa).

Belongs to the elongation factor P family.

The protein resides in the cytoplasm. It participates in protein biosynthesis; polypeptide chain elongation. Its function is as follows. Involved in peptide bond synthesis. Stimulates efficient translation and peptide-bond synthesis on native or reconstituted 70S ribosomes in vitro. Probably functions indirectly by altering the affinity of the ribosome for aminoacyl-tRNA, thus increasing their reactivity as acceptors for peptidyl transferase. The polypeptide is Elongation factor P (Aromatoleum aromaticum (strain DSM 19018 / LMG 30748 / EbN1) (Azoarcus sp. (strain EbN1))).